A 71-amino-acid polypeptide reads, in one-letter code: uncharacterized protein (71 aa).

Positions 1–21 (MGVGLHGDHVGGELNSANAFT) are cleaved as a signal peptide.

This is an uncharacterized protein from Haemophilus influenzae (strain ATCC 51907 / DSM 11121 / KW20 / Rd).